An 85-amino-acid chain; its full sequence is uncharacterized protein (85 aa).

This is an uncharacterized protein from Escherichia coli (Bacteriophage T4).